The primary structure comprises 285 residues: Protein phosphatase 1 regulatory subunit 3B (285 aa).

A PP1-binding motif motif is present at residues 62 to 65; the sequence is RVSF. The CBM21 domain maps to 125–233; that stretch reads RNRLQADHVC…SNRGKNYRII (109 aa). At Ser-261 the chain carries Phosphoserine.

As to quaternary structure, interacts with glycogen, PPP1CC catalytic subunit of PP1 and PYGL. Associates with glycogen particles. Forms complexes with debranching enzyme, glycogen phosphorylase, glycogen synthase and phosphorylase kinase which is necessary for its regulation of PP1 activity. Highly expressed in the liver and, at lower levels, in skeletal muscle, including in vastus lateralis, gastrocnemius and soleus (at protein level). Highest mRNA levels are observed in skeletal muscle, and only moderate levels in liver and heart. Weak expression in placenta and lung.

Functionally, acts as a glycogen-targeting subunit for phosphatase PP1. Facilitates interaction of the PP1 with enzymes of the glycogen metabolism and regulates its activity. Suppresses the rate at which PP1 dephosphorylates (inactivates) glycogen phosphorylase and enhances the rate at which it activates glycogen synthase and therefore limits glycogen breakdown. Its activity is inhibited by PYGL, resulting in inhibition of the glycogen synthase and glycogen phosphorylase phosphatase activities of PP1. Dramatically increases basal and insulin-stimulated glycogen synthesis upon overexpression in hepatocytes. This Homo sapiens (Human) protein is Protein phosphatase 1 regulatory subunit 3B (PPP1R3B).